The chain runs to 325 residues: Holliday junction branch migration complex subunit RuvB (325 aa).

The segment at 1 to 180 is large ATPase domain (RuvB-L); sequence MKNQLLDAKV…FGIHLKLNFY (180 aa). ATP contacts are provided by residues Leu19, Arg20, Gly61, Lys64, Thr65, Ser66, 127 to 129, Arg170, Tyr180, and Arg217; that span reads EDF. Thr65 is a binding site for Mg(2+). Positions 181-251 are small ATPAse domain (RuvB-S); that stretch reads SCEELTQIVE…ITDYALNQLG (71 aa). A head domain (RuvB-H) region spans residues 254 to 325; that stretch reads KLGLDSSDHK…ITANALKHLH (72 aa). Residues Arg290, Arg309, and Arg314 each coordinate DNA.

It belongs to the RuvB family. Homohexamer. Forms an RuvA(8)-RuvB(12)-Holliday junction (HJ) complex. HJ DNA is sandwiched between 2 RuvA tetramers; dsDNA enters through RuvA and exits via RuvB. An RuvB hexamer assembles on each DNA strand where it exits the tetramer. Each RuvB hexamer is contacted by two RuvA subunits (via domain III) on 2 adjacent RuvB subunits; this complex drives branch migration. In the full resolvosome a probable DNA-RuvA(4)-RuvB(12)-RuvC(2) complex forms which resolves the HJ.

It localises to the cytoplasm. It catalyses the reaction ATP + H2O = ADP + phosphate + H(+). The RuvA-RuvB-RuvC complex processes Holliday junction (HJ) DNA during genetic recombination and DNA repair, while the RuvA-RuvB complex plays an important role in the rescue of blocked DNA replication forks via replication fork reversal (RFR). RuvA specifically binds to HJ cruciform DNA, conferring on it an open structure. The RuvB hexamer acts as an ATP-dependent pump, pulling dsDNA into and through the RuvAB complex. RuvB forms 2 homohexamers on either side of HJ DNA bound by 1 or 2 RuvA tetramers; 4 subunits per hexamer contact DNA at a time. Coordinated motions by a converter formed by DNA-disengaged RuvB subunits stimulates ATP hydrolysis and nucleotide exchange. Immobilization of the converter enables RuvB to convert the ATP-contained energy into a lever motion, pulling 2 nucleotides of DNA out of the RuvA tetramer per ATP hydrolyzed, thus driving DNA branch migration. The RuvB motors rotate together with the DNA substrate, which together with the progressing nucleotide cycle form the mechanistic basis for DNA recombination by continuous HJ branch migration. Branch migration allows RuvC to scan DNA until it finds its consensus sequence, where it cleaves and resolves cruciform DNA. This chain is Holliday junction branch migration complex subunit RuvB, found in Orientia tsutsugamushi (strain Boryong) (Rickettsia tsutsugamushi).